Reading from the N-terminus, the 151-residue chain is U1 small nuclear ribonucleoprotein C (151 aa).

The segment at 4-36 (FYCEYCSIYLTHSSPAGRKQHSQGRKHISAKVE) adopts a Matrin-type zinc-finger fold.

This sequence belongs to the U1 small nuclear ribonucleoprotein C family. As to quaternary structure, U1 snRNP is composed of the 7 core Sm proteins B/B', D1, D2, D3, E, F and G that assemble in a heptameric protein ring on the Sm site of the small nuclear RNA to form the core snRNP, and at least 3 U1 snRNP-specific proteins U1-70K, U1-A and U1-C. U1-C interacts with U1 snRNA and the 5' splice-site region of the pre-mRNA.

Its subcellular location is the nucleus. Component of the spliceosomal U1 snRNP, which is essential for recognition of the pre-mRNA 5' splice-site and the subsequent assembly of the spliceosome. U1-C is directly involved in initial 5' splice-site recognition for both constitutive and regulated alternative splicing. The interaction with the 5' splice-site seems to precede base-pairing between the pre-mRNA and the U1 snRNA. Stimulates commitment or early (E) complex formation by stabilizing the base pairing of the 5' end of the U1 snRNA and the 5' splice-site region. The polypeptide is U1 small nuclear ribonucleoprotein C (Theileria annulata).